The primary structure comprises 135 residues: VHFSSSVMVLLFGLPFLVTLVCYGLMALRLCRPLPGAGQSSSRLRSLRTIAVVMTVFAVCLVPFHITRTIYYLARLLKADCQILNIVNVVYKVTRPLASANSCLDPLLYLFTGDKYRHQLQRLCRVSAPQRRITA.

Residues 1 to 25 form a helical membrane-spanning segment; that stretch reads VHFSSSVMVLLFGLPFLVTLVCYGL. Residues 26-49 lie on the Cytoplasmic side of the membrane; it reads MALRLCRPLPGAGQSSSRLRSLRT. The chain crosses the membrane as a helical span at residues 50–72; it reads IAVVMTVFAVCLVPFHITRTIYY. At 73-90 the chain is on the extracellular side; that stretch reads LARLLKADCQILNIVNVV. Residues 91 to 112 form a helical membrane-spanning segment; sequence YKVTRPLASANSCLDPLLYLFT. Over 113–135 the chain is Cytoplasmic; sequence GDKYRHQLQRLCRVSAPQRRITA.

It belongs to the G-protein coupled receptor 1 family. In terms of tissue distribution, expressed in brain, heart, stria vascularis and vestibular labyrinth.

It localises to the cell membrane. In terms of biological role, receptor for ATP and UTP coupled to G-proteins that activate a phosphatidylinositol-calcium second messenger system. Not activated by UDP. This Meriones unguiculatus (Mongolian jird) protein is P2Y purinoceptor 4 (P2RY4).